Here is a 275-residue protein sequence, read N- to C-terminus: Formamidopyrimidine-DNA glycosylase (275 aa).

The active-site Schiff-base intermediate with DNA is the Pro-2. Catalysis depends on Glu-3, which acts as the Proton donor. Lys-58 (proton donor; for beta-elimination activity) is an active-site residue. DNA contacts are provided by His-91, Arg-109, and Lys-154. An FPG-type zinc finger spans residues 240-274 (AVYERAGLACRVCGTPIRRLVQGQRATYFCPHCQK). Residue Arg-264 is the Proton donor; for delta-elimination activity of the active site.

It belongs to the FPG family. Monomer. It depends on Zn(2+) as a cofactor.

The catalysed reaction is Hydrolysis of DNA containing ring-opened 7-methylguanine residues, releasing 2,6-diamino-4-hydroxy-5-(N-methyl)formamidopyrimidine.. It catalyses the reaction 2'-deoxyribonucleotide-(2'-deoxyribose 5'-phosphate)-2'-deoxyribonucleotide-DNA = a 3'-end 2'-deoxyribonucleotide-(2,3-dehydro-2,3-deoxyribose 5'-phosphate)-DNA + a 5'-end 5'-phospho-2'-deoxyribonucleoside-DNA + H(+). Functionally, involved in base excision repair of DNA damaged by oxidation or by mutagenic agents. Acts as a DNA glycosylase that recognizes and removes damaged bases. Has a preference for oxidized purines, such as 7,8-dihydro-8-oxoguanine (8-oxoG). Has AP (apurinic/apyrimidinic) lyase activity and introduces nicks in the DNA strand. Cleaves the DNA backbone by beta-delta elimination to generate a single-strand break at the site of the removed base with both 3'- and 5'-phosphates. The protein is Formamidopyrimidine-DNA glycosylase of Bordetella avium (strain 197N).